The following is a 356-amino-acid chain: sn-glycerol-3-phosphate import ATP-binding protein UgpC (356 aa).

Positions 4-235 constitute an ABC transporter domain; the sequence is LKLQAVTKSW…PASLFVASFI (232 aa). 37–44 contacts ATP; it reads GPSGCGKS.

Belongs to the ABC transporter superfamily. sn-glycerol-3-phosphate importer (TC 3.A.1.1.3) family. In terms of assembly, the complex is composed of two ATP-binding proteins (UgpC), two transmembrane proteins (UgpA and UgpE) and a solute-binding protein (UgpB).

Its subcellular location is the cell inner membrane. It carries out the reaction sn-glycerol 3-phosphate(out) + ATP + H2O = sn-glycerol 3-phosphate(in) + ADP + phosphate + H(+). In terms of biological role, part of the ABC transporter complex UgpBAEC involved in sn-glycerol-3-phosphate (G3P) import. Responsible for energy coupling to the transport system. This Escherichia coli O6:H1 (strain CFT073 / ATCC 700928 / UPEC) protein is sn-glycerol-3-phosphate import ATP-binding protein UgpC.